The sequence spans 145 residues: Protein BUD31 homolog 3 (145 aa).

Belongs to the BUD31 (G10) family.

The protein localises to the nucleus. The protein is Protein BUD31 homolog 3 of Oryza sativa subsp. japonica (Rice).